We begin with the raw amino-acid sequence, 274 residues long: Ribosomal RNA small subunit methyltransferase A (274 aa).

S-adenosyl-L-methionine contacts are provided by histidine 15, leucine 17, glycine 42, glutamate 64, aspartate 89, and asparagine 109.

This sequence belongs to the class I-like SAM-binding methyltransferase superfamily. rRNA adenine N(6)-methyltransferase family. RsmA subfamily.

The protein localises to the cytoplasm. The enzyme catalyses adenosine(1518)/adenosine(1519) in 16S rRNA + 4 S-adenosyl-L-methionine = N(6)-dimethyladenosine(1518)/N(6)-dimethyladenosine(1519) in 16S rRNA + 4 S-adenosyl-L-homocysteine + 4 H(+). Specifically dimethylates two adjacent adenosines (A1518 and A1519) in the loop of a conserved hairpin near the 3'-end of 16S rRNA in the 30S particle. May play a critical role in biogenesis of 30S subunits. This Synechococcus sp. (strain RCC307) protein is Ribosomal RNA small subunit methyltransferase A.